A 72-amino-acid chain; its full sequence is Translation initiation factor IF-1 (72 aa).

The S1-like domain maps to 1-72; it reads MSKDDVIEMQ…SRGRITWRAK (72 aa).

The protein belongs to the IF-1 family. In terms of assembly, component of the 30S ribosomal translation pre-initiation complex which assembles on the 30S ribosome in the order IF-2 and IF-3, IF-1 and N-formylmethionyl-tRNA(fMet); mRNA recruitment can occur at any time during PIC assembly.

The protein localises to the cytoplasm. Its function is as follows. One of the essential components for the initiation of protein synthesis. Stabilizes the binding of IF-2 and IF-3 on the 30S subunit to which N-formylmethionyl-tRNA(fMet) subsequently binds. Helps modulate mRNA selection, yielding the 30S pre-initiation complex (PIC). Upon addition of the 50S ribosomal subunit IF-1, IF-2 and IF-3 are released leaving the mature 70S translation initiation complex. This is Translation initiation factor IF-1 from Clostridium novyi (strain NT).